Here is a 287-residue protein sequence, read N- to C-terminus: Probable endonuclease 4 (287 aa).

His69, His109, Glu144, Asp178, His181, His215, Asp228, His230, and Glu260 together coordinate Zn(2+).

The protein belongs to the AP endonuclease 2 family. It depends on Zn(2+) as a cofactor.

It catalyses the reaction Endonucleolytic cleavage to 5'-phosphooligonucleotide end-products.. Endonuclease IV plays a role in DNA repair. It cleaves phosphodiester bonds at apurinic or apyrimidinic (AP) sites, generating a 3'-hydroxyl group and a 5'-terminal sugar phosphate. In Thermotoga petrophila (strain ATCC BAA-488 / DSM 13995 / JCM 10881 / RKU-1), this protein is Probable endonuclease 4.